Consider the following 2609-residue polypeptide: Beige protein homolog 1 (2609 aa).

Disordered regions lie at residues 1654–1679 and 1691–1729; these read DSKL…APVS and ILPS…KNRT. Residues 1711–1723 show a composition bias toward acidic residues; the sequence is MEDEEDDVDEEDK. In terms of domain architecture, BEACH-type PH spans 1735-1870; sequence ESGDSIQDVY…NRDSLYQKLV (136 aa). The region spanning 1907 to 2202 is the BEACH domain; it reads ANALSFSTTH…QVFKKPHPQR (296 aa). WD repeat units follow at residues 2249–2290, 2294–2332, 2340–2379, 2429–2475, and 2507–2546; these read KDEV…QPVM, LHSE…PIKA, GHRY…FVSS, NSDE…NAKL, and ATRQ…SNVH. An FYVE-type zinc finger spans residues 2550–2604; it reads DNTSELCSLCDSRFSLMEWRSQCRACGNSNVCSDCVSMLKDTNIKTCYECYRQMP.

The protein resides in the cytoplasm. The protein localises to the membrane. In terms of biological role, may be involved in protein sorting and cell wall formation. The chain is Beige protein homolog 1 (lvs1) from Schizosaccharomyces pombe (strain 972 / ATCC 24843) (Fission yeast).